We begin with the raw amino-acid sequence, 622 residues long: 1,4-alpha-glucan branching enzyme GlgB (622 aa).

Residue Asp306 is the Nucleophile of the active site. Glu358 (proton donor) is an active-site residue. The disordered stretch occupies residues 581–606 (YGGSNVGNRGAVHSDPVEKHGHSHSL).

Belongs to the glycosyl hydrolase 13 family. GlgB subfamily. Monomer.

It catalyses the reaction Transfers a segment of a (1-&gt;4)-alpha-D-glucan chain to a primary hydroxy group in a similar glucan chain.. Its pathway is glycan biosynthesis; glycogen biosynthesis. Functionally, catalyzes the formation of the alpha-1,6-glucosidic linkages in glycogen by scission of a 1,4-alpha-linked oligosaccharide from growing alpha-1,4-glucan chains and the subsequent attachment of the oligosaccharide to the alpha-1,6 position. The protein is 1,4-alpha-glucan branching enzyme GlgB of Salinibacter ruber (strain DSM 13855 / M31).